Consider the following 222-residue polypeptide: Peptide methionine sulfoxide reductase MsrA (222 aa).

The active site involves cysteine 55.

The protein belongs to the MsrA Met sulfoxide reductase family.

The enzyme catalyses L-methionyl-[protein] + [thioredoxin]-disulfide + H2O = L-methionyl-(S)-S-oxide-[protein] + [thioredoxin]-dithiol. It carries out the reaction [thioredoxin]-disulfide + L-methionine + H2O = L-methionine (S)-S-oxide + [thioredoxin]-dithiol. Functionally, has an important function as a repair enzyme for proteins that have been inactivated by oxidation. Catalyzes the reversible oxidation-reduction of methionine sulfoxide in proteins to methionine. This chain is Peptide methionine sulfoxide reductase MsrA, found in Streptomyces griseus subsp. griseus (strain JCM 4626 / CBS 651.72 / NBRC 13350 / KCC S-0626 / ISP 5235).